We begin with the raw amino-acid sequence, 912 residues long: Phosphatidylinositol-3-phosphatase SAC1 (912 aa).

A disordered region spans residues 1–29 (MAKSENSTTSTFSSFANKIQPSNDAESDP). The SAC domain maps to 173–575 (LSSVDLTKDF…GDALAQQYGG (403 aa)). Residues 511 to 522 (RTNCIDCLDRTN) carry the Phosphatase catalytic core motif. The segment at 715-912 (RPGGNTGSTG…VGDDKVPKVI (198 aa)) is required for subcellular localization. The interval 740–766 (LFGSRKPEESSSATKSGADDSEKGVTS) is disordered.

Component of the PI(3,5)P2 regulatory complex at least composed of ATG18, SAC/FIG4, FAB1 and VAC14. It depends on Mg(2+) as a cofactor. Ubiquitous with higher expression level in both young elongating and nonelongating stems. Detected in vascular tissues.

The protein localises to the vacuole membrane. It is found in the golgi apparatus. The catalysed reaction is a 1,2-diacyl-sn-glycero-3-phospho-(1D-myo-inositol-3-phosphate) + H2O = a 1,2-diacyl-sn-glycero-3-phospho-(1D-myo-inositol) + phosphate. It catalyses the reaction a 1,2-diacyl-sn-glycero-3-phospho-(1D-myo-inositol-3,5-bisphosphate) + H2O = a 1,2-diacyl-sn-glycero-3-phospho-(1D-myo-inositol-3-phosphate) + phosphate. It carries out the reaction a 1,2-diacyl-sn-glycero-3-phospho-(1D-myo-inositol 4-phosphate) + H2O = a 1,2-diacyl-sn-glycero-3-phospho-(1D-myo-inositol) + phosphate. Phosphoinositide phosphatase which catalyzes the hydrolysis of phosphatidylinositol-3,5-bisphosphate (PtdIns(3,5)P2). Can also catalyze the hydrolysis of phosphatidylinositol 3-phosphate (PtdIns(3)P) and phosphatidylinositol 4-phosphate (PtdIns(4)P). Required for normal cell morphogenesis, cell wall synthesis, and actin organization. In Arabidopsis thaliana (Mouse-ear cress), this protein is Phosphatidylinositol-3-phosphatase SAC1 (SAC1).